The following is a 152-amino-acid chain: uncharacterized protein (152 aa).

Transmembrane regions (helical) follow at residues 13–33, 38–58, and 69–89; these read LLWF…LLFF, LIVE…SLFM, and WVIF…FFVI.

The protein localises to the cell membrane. This is an uncharacterized protein from Mycoplasma pneumoniae (strain ATCC 29342 / M129 / Subtype 1) (Mycoplasmoides pneumoniae).